The primary structure comprises 326 residues: Cathepsin L-like proteinase (326 aa).

An N-terminal signal peptide occupies residues 1-15 (MRLFILAVLTVGVLG). A propeptide spans 16 to 106 (SNDDLWHQWK…HGVPYEANNR (91 aa)) (activation peptide). Proline 109 carries the post-translational modification 3-hydroxyproline; partial. Cystine bridges form between cysteine 129–cysteine 172, cysteine 163–cysteine 204, and cysteine 262–cysteine 311. The active site involves cysteine 132. Proline 196 carries the 3-hydroxyproline; partial modification. Catalysis depends on residues histidine 269 and asparagine 289.

It belongs to the peptidase C1 family. Monomer. Contains cysteine residues involved in intramolecular disulfide bonding.

It is found in the secreted. Strongly inhibited by Antipain, E64 and Leupeptin, and weakly inhibited by iodoacetic acid (IAA) and phenylmethylsulfonyl fluoride (PMSF). Requires the presence of dithiothreitol (DTT) for activity. Its function is as follows. Thiol protease. Probably involved in interaction with host tissues. Displays a similar activity to that of papain. Has high activity on Z-Phe-Arg-NHMec, but no activity on Z-Arg-NHMec. This chain is Cathepsin L-like proteinase, found in Fasciola hepatica (Liver fluke).